We begin with the raw amino-acid sequence, 556 residues long: Formate--tetrahydrofolate ligase (556 aa).

Residue 65–72 (TPAGEGKS) participates in ATP binding.

Belongs to the formate--tetrahydrofolate ligase family.

The enzyme catalyses (6S)-5,6,7,8-tetrahydrofolate + formate + ATP = (6R)-10-formyltetrahydrofolate + ADP + phosphate. Its pathway is one-carbon metabolism; tetrahydrofolate interconversion. In Streptococcus agalactiae serotype V (strain ATCC BAA-611 / 2603 V/R), this protein is Formate--tetrahydrofolate ligase.